We begin with the raw amino-acid sequence, 74 residues long: Sec-independent protein translocase protein TatA (74 aa).

The chain crosses the membrane as a helical span at residues 1-21; sequence MGSIGMTELLLIFGIIVLLFG.

This sequence belongs to the TatA/E family. In terms of assembly, forms a complex with TatC.

Its subcellular location is the cell inner membrane. Functionally, part of the twin-arginine translocation (Tat) system that transports large folded proteins containing a characteristic twin-arginine motif in their signal peptide across membranes. TatA could form the protein-conducting channel of the Tat system. The protein is Sec-independent protein translocase protein TatA of Sulfurihydrogenibium sp. (strain YO3AOP1).